Reading from the N-terminus, the 194-residue chain is Putative manganese efflux pump MntP (194 aa).

The next 6 membrane-spanning stretches (helical) occupy residues 3–23, 37–57, 69–89, 110–132, 147–167, and 172–192; these read PFSI…AAIG, LRAG…GWLL, DHWI…VAGL, LGLA…SLAF, CTFS…NLIG, and MLGG…HLSG.

Belongs to the MntP (TC 9.B.29) family.

The protein resides in the cell inner membrane. In terms of biological role, probably functions as a manganese efflux pump. The chain is Putative manganese efflux pump MntP from Xanthomonas euvesicatoria pv. vesicatoria (strain 85-10) (Xanthomonas campestris pv. vesicatoria).